A 219-amino-acid chain; its full sequence is Transmembrane protein 247 (219 aa).

Basic and acidic residues-rich tracts occupy residues 1–10 (MAAEDREMME) and 29–45 (SKSE…ESQK). The tract at residues 1–101 (MAAEDREMME…LPPTPGTERN (101 aa)) is disordered. Positions 121-156 (LHEKNQRQRQHEVVMEQLQRERQHEVVMEQLQQEAA) form a coiled coil. Transmembrane regions (helical) follow at residues 167 to 187 (FLLP…IHII) and 194 to 214 (VFFL…LCLI).

Its subcellular location is the membrane. In Homo sapiens (Human), this protein is Transmembrane protein 247 (TMEM247).